Consider the following 452-residue polypeptide: MASGAAQNSSQMACDSEIPGFLDAFLQDFPAPLSLESPLPWKVPGTVLSQEEVEAELIELALGFLGSRNAPPSFAVAVTHEAISQLLQTDLSEFKRLPEQEEEEEEEEEEKALVTLLDAKGLARSFFNCLWKVCSQWQKQVPLTAQAPQWQWLVSIHAIRNTRRKMEDRHVSLPAFNHLFGLSDSVHRAYFAVFDGHGGVDAARYASVHVHTNASHQPELRTNPAAALKEAFRLTDEMFLQKAKRERLQSGTTGVCALIAGAALHVAWLGDSQVILVQQGRVVKLMEPHKPERQDEKARIEALGGFVSLMDCWRVNGTLAVSRAIGDVFQKPYVSGEADAASRELTGSEDYLLLACDGFFDVVPHHEVTGLVHGHLLRHKGNGMRIAEELVAVARDRGSHDNITVMVVFLREPLELLEGGVQGTGDAQADVGSQDLSTGLSELEISNTSQRS.

The PPM-type phosphatase domain occupies 153 to 410; sequence LVSIHAIRNT…DNITVMVVFL (258 aa). The Mn(2+) site is built by D195, G196, D357, and D401. At S452 the chain carries Phosphoserine.

It belongs to the PP2C family. Associates with FEM1B. Mg(2+) serves as cofactor. Mn(2+) is required as a cofactor. As to expression, expressed in the liver.

It catalyses the reaction O-phospho-L-seryl-[protein] + H2O = L-seryl-[protein] + phosphate. The catalysed reaction is O-phospho-L-threonyl-[protein] + H2O = L-threonyl-[protein] + phosphate. Dephosphorylates and concomitantly deactivates CaM-kinase II activated upon autophosphorylation, and CaM-kinases IV and I activated upon phosphorylation by CaM-kinase kinase. Promotes apoptosis. The sequence is that of Protein phosphatase 1F (Ppm1f) from Mus musculus (Mouse).